Consider the following 201-residue polypeptide: dTTP/UTP pyrophosphatase (201 aa).

Aspartate 76 (proton acceptor) is an active-site residue.

Belongs to the Maf family. YhdE subfamily. A divalent metal cation is required as a cofactor.

It is found in the cytoplasm. It catalyses the reaction dTTP + H2O = dTMP + diphosphate + H(+). The catalysed reaction is UTP + H2O = UMP + diphosphate + H(+). Nucleoside triphosphate pyrophosphatase that hydrolyzes dTTP and UTP. May have a dual role in cell division arrest and in preventing the incorporation of modified nucleotides into cellular nucleic acids. In Neisseria meningitidis serogroup A / serotype 4A (strain DSM 15465 / Z2491), this protein is dTTP/UTP pyrophosphatase.